The following is a 193-amino-acid chain: General stress protein 16U (193 aa).

The protein belongs to the CAPAB/TerDEXZ family.

The protein is General stress protein 16U (yceD) of Bacillus subtilis (strain 168).